A 322-amino-acid chain; its full sequence is HPr kinase/phosphorylase (322 aa).

Residues His-146 and Lys-167 contribute to the active site. 161 to 168 (GDSGLGKS) is a binding site for ATP. Mg(2+) is bound at residue Ser-168. Residue Asp-185 is the Proton acceptor; for phosphorylation activity. Proton donor; for dephosphorylation activity of the active site. The segment at 209 to 218 (LEVRGLGLLD) is important for the catalytic mechanism of both phosphorylation and dephosphorylation. Mg(2+) is bound at residue Glu-210. The active site involves Arg-250. The important for the catalytic mechanism of dephosphorylation stretch occupies residues 271–276 (QVAAGR).

Belongs to the HPrK/P family. In terms of assembly, homohexamer. It depends on Mg(2+) as a cofactor.

The enzyme catalyses [HPr protein]-L-serine + ATP = [HPr protein]-O-phospho-L-serine + ADP + H(+). The catalysed reaction is [HPr protein]-O-phospho-L-serine + phosphate + H(+) = [HPr protein]-L-serine + diphosphate. Functionally, catalyzes the ATP- as well as the pyrophosphate-dependent phosphorylation of a specific serine residue in HPr, a phosphocarrier protein of the phosphoenolpyruvate-dependent sugar phosphotransferase system (PTS). HprK/P also catalyzes the pyrophosphate-producing, inorganic phosphate-dependent dephosphorylation (phosphorolysis) of seryl-phosphorylated HPr (P-Ser-HPr). This chain is HPr kinase/phosphorylase, found in Paraburkholderia phymatum (strain DSM 17167 / CIP 108236 / LMG 21445 / STM815) (Burkholderia phymatum).